The following is a 230-amino-acid chain: UPF0688 protein C1orf174 homolog (230 aa).

Disordered stretches follow at residues 1–85 and 97–166; these read MRSR…SLPK and AEDS…VRAS. Low complexity predominate over residues 11-30; the sequence is RSSARLRARSYSSASLASAR. Residues 31-48 are compositionally biased toward polar residues; the sequence is DVTSSTSAKTTCLASSSH. A compositionally biased stretch (basic and acidic residues) spans 49 to 78; the sequence is KATDRRTSKKFKYDKGHLVKAELQKLDPKS. Residue S180 is modified to Phosphoserine.

Belongs to the UPF0688 family.

The protein localises to the nucleus. The polypeptide is UPF0688 protein C1orf174 homolog (Mus musculus (Mouse)).